Reading from the N-terminus, the 417-residue chain is Tyrosine--tRNA ligase (417 aa).

Y35 is an L-tyrosine binding site. The 'HIGH' region signature appears at 40 to 49 (ATAGSLTVGH). Residues Y165 and Q169 each contribute to the L-tyrosine site. Residues 229 to 233 (KFGKS) carry the 'KMSKS' region motif. K232 contacts ATP. An S4 RNA-binding domain is found at 350–416 (ISLLEALVFT…GKRFNALIIF (67 aa)).

This sequence belongs to the class-I aminoacyl-tRNA synthetase family. TyrS type 1 subfamily. As to quaternary structure, homodimer.

The protein localises to the cytoplasm. The enzyme catalyses tRNA(Tyr) + L-tyrosine + ATP = L-tyrosyl-tRNA(Tyr) + AMP + diphosphate + H(+). Its function is as follows. Catalyzes the attachment of tyrosine to tRNA(Tyr) in a two-step reaction: tyrosine is first activated by ATP to form Tyr-AMP and then transferred to the acceptor end of tRNA(Tyr). This is Tyrosine--tRNA ligase from Phytoplasma mali (strain AT).